We begin with the raw amino-acid sequence, 113 residues long: TYRO protein tyrosine kinase-binding protein (113 aa).

The N-terminal stretch at 1–27 is a signal peptide; sequence MGGLEPCSRLLLLPLLLAVGGLRPVQA. Over 28-40 the chain is Extracellular; the sequence is QAQSDCSCSTVSP. The helical transmembrane segment at 41–61 threads the bilayer; it reads GVLAGIVMGDLVLTVLIALAV. Residue aspartate 50 coordinates Ca(2+). The Cytoplasmic portion of the chain corresponds to 62–113; that stretch reads YFLGRLVHRGRGAAEAATRKQRITETESPYQELQGQRSDVYSDLNMQRPYYK. A disordered region spans residues 75-113; it reads AEAATRKQRITETESPYQELQGQRSDVYSDLNMQRPYYK. One can recognise an ITAM domain in the interval 80–108; that stretch reads RKQRITETESPYQELQGQRSDVYSDLNMQ. Positions 87–100 are enriched in polar residues; sequence TESPYQELQGQRSD. Tyrosine 91 and tyrosine 102 each carry phosphotyrosine.

Belongs to the TYROBP family. As to quaternary structure, homodimer; disulfide-linked. Homotrimer; disulfide-linked. Homotetramer; disulfide-linked. Homotrimers and homotetramers form when low levels of partner receptors are available and is competitive with assembly with interacting receptors. They may represent alternative oligomerization states or may be intermediates in the receptor assembly process. Binding of a metal cation aids in homooligomerization through coordination of the metal ion by the subunits of the oligomer. Interacts with TREM1. Interacts with TREM2. Interacts with CLECSF5. Interacts with CD300LB and CD300C2. Interacts with CD300E. Interacts (via ITAM domain) with SYK (via SH2 domains); activates SYK mediating neutrophils and macrophages integrin-mediated activation. Interacts with KLRC2. Interacts with CD300H. Interacts with KLRD1. Interacts with SIGLEC1. In terms of processing, following ligand binding by associated receptors, tyrosine phosphorylated in the ITAM domain which leads to activation of additional tyrosine kinases and subsequent cell activation.

The protein localises to the cell membrane. Adapter protein which non-covalently associates with activating receptors found on the surface of a variety of immune cells to mediate signaling and cell activation following ligand binding by the receptors. TYROBP is tyrosine-phosphorylated in the ITAM domain following ligand binding by the associated receptors which leads to activation of additional tyrosine kinases and subsequent cell activation. Also has an inhibitory role in some cells. Non-covalently associates with activating receptors of the CD300 family to mediate cell activation. Also mediates cell activation through association with activating receptors of the CD200R family. Required for neutrophil activation mediated by integrin. Required for the activation of myeloid cells mediated by the CLEC5A/MDL1 receptor. Associates with natural killer (NK) cell receptors such as the KLRD1/KLRC2 heterodimer to mediate NK cell activation. Associates with TREM1 to mediate activation of neutrophils and monocytes. Associates with TREM2 on monocyte-derived dendritic cells to mediate up-regulation of chemokine receptor CCR7 and dendritic cell maturation and survival. Association with TREM2 mediates cytokine-induced formation of multinucleated giant cells which are formed by the fusion of macrophages. Stabilizes the TREM2 C-terminal fragment (TREM2-CTF) produced by TREM2 ectodomain shedding which suppresses the release of pro-inflammatory cytokines. In microglia, required with TREM2 for phagocytosis of apoptotic neurons. Required with ITGAM/CD11B in microglia to control production of microglial superoxide ions which promote the neuronal apoptosis that occurs during brain development. Promotes pro-inflammatory responses in microglia following nerve injury which accelerates degeneration of injured neurons. Positively regulates the expression of the IRAK3/IRAK-M kinase and IL10 production by liver dendritic cells and inhibits their T cell allosimulatory ability. Negatively regulates B cell proliferation. Required for CSF1-mediated osteoclast cytoskeletal organization. Positively regulates multinucleation during osteoclast development. This Pan troglodytes (Chimpanzee) protein is TYRO protein tyrosine kinase-binding protein.